Consider the following 968-residue polypeptide: Protein translocase subunit SecA (968 aa).

Residues glutamine 99, 117–121, and aspartate 631 each bind ATP; that span reads GEGKT.

This sequence belongs to the SecA family. In terms of assembly, monomer and homodimer. Part of the essential Sec protein translocation apparatus which comprises SecA, SecYEG and auxiliary proteins SecDF. Other proteins may also be involved.

It localises to the cell inner membrane. The protein resides in the cytoplasm. The catalysed reaction is ATP + H2O + cellular proteinSide 1 = ADP + phosphate + cellular proteinSide 2.. In terms of biological role, part of the Sec protein translocase complex. Interacts with the SecYEG preprotein conducting channel. Has a central role in coupling the hydrolysis of ATP to the transfer of proteins into and across the cell membrane, serving as an ATP-driven molecular motor driving the stepwise translocation of polypeptide chains across the membrane. This chain is Protein translocase subunit SecA, found in Chlamydia muridarum (strain MoPn / Nigg).